Here is a 348-residue protein sequence, read N- to C-terminus: Protein pof5 (348 aa).

This sequence to yeast YDR306C. Interacts with skp1.

It localises to the mitochondrion. This is Protein pof5 (pof5) from Schizosaccharomyces pombe (strain 972 / ATCC 24843) (Fission yeast).